We begin with the raw amino-acid sequence, 194 residues long: MRQAEIKRKTQETDIELAVNLDQQEPVAIETGVGFFDHMLTLFARHSRISLTVKAEGDLWVDSHHTVEDVGIVLGLALRQALGDKAGINRYGTSFVPMDETLGMASLDLSGRSYLVFEADFDNPKLGNFDTELVEEFFQALAFNLQMNLHLKILHGKNSHHKAESLFKATGRALREAITINPEIHGVNSTKGLL.

Belongs to the imidazoleglycerol-phosphate dehydratase family.

Its subcellular location is the cytoplasm. The enzyme catalyses D-erythro-1-(imidazol-4-yl)glycerol 3-phosphate = 3-(imidazol-4-yl)-2-oxopropyl phosphate + H2O. It participates in amino-acid biosynthesis; L-histidine biosynthesis; L-histidine from 5-phospho-alpha-D-ribose 1-diphosphate: step 6/9. The polypeptide is Imidazoleglycerol-phosphate dehydratase (Streptococcus gordonii (strain Challis / ATCC 35105 / BCRC 15272 / CH1 / DL1 / V288)).